The following is a 193-amino-acid chain: Allatostatin A (193 aa).

Positions 1 to 25 are cleaved as a signal peptide; sequence MKTSSLIAMRLIIFYLLSVVGRSTA. Positions 26-64 are excised as a propeptide; that stretch reads AVEEAPASSLHIPRLNPLSSNLEYDEPSEKRAYAYISEY. The residue at position 74 (isoleucine 74) is an Isoleucine amide. A propeptide spanning residues 78 to 84 is cleaved from the precursor; it reads WIDNSED. Residues isoleucine 94 and isoleucine 105 each carry the isoleucine amide modification. The propeptide occupies 109–139; it reads NSGYRPLGMDFSVDNMDFHSREDNLDDFIDD. Residue isoleucine 150 is modified to Isoleucine amide. Serine amide is present on serine 165. A propeptide spanning residues 169 to 193 is cleaved from the precursor; that stretch reads LNDVVGPKYLLGLGKGLSENENLIQ.

This sequence belongs to the allatostatin family. Allatostatins A1, A2 and A3 are expressed in brain, antennal lobes, optical lobes, gnathal ganglia, the retrocerebral complex and thoracic, abdominal and ventral ganglia. Allatostain A4 is expressed in brain (at protein level).

Its subcellular location is the secreted. May act as a neurotransmitter or neuromodulator. The sequence is that of Allatostatin A from Camponotus floridanus (Florida carpenter ant).